A 509-amino-acid chain; its full sequence is L-arabinose isomerase (509 aa).

The Mn(2+) site is built by Glu-313, Glu-340, His-357, and His-456.

Belongs to the arabinose isomerase family. Mn(2+) is required as a cofactor.

It catalyses the reaction beta-L-arabinopyranose = L-ribulose. It participates in carbohydrate degradation; L-arabinose degradation via L-ribulose; D-xylulose 5-phosphate from L-arabinose (bacterial route): step 1/3. Catalyzes the conversion of L-arabinose to L-ribulose. The sequence is that of L-arabinose isomerase from Phocaeicola vulgatus (strain ATCC 8482 / DSM 1447 / JCM 5826 / CCUG 4940 / NBRC 14291 / NCTC 11154) (Bacteroides vulgatus).